The sequence spans 90 residues: Mucin-like protein 1 (90 aa).

Residues 1–20 form the signal peptide; it reads MKFLAVLVLLGVSIFLVSAQ. Threonine 23, threonine 24, threonine 30, threonine 34, threonine 46, threonine 47, threonine 51, threonine 52, threonine 54, threonine 55, threonine 59, threonine 60, threonine 62, and threonine 63 each carry an O-linked (GalNAc...) threonine glycan. Composition is skewed to low complexity over residues 25-36 and 44-68; these read AAPADTYPATGP and AETTAAATTATTAAPTTATTAASTT. Residues 25-68 are disordered; the sequence is AAPADTYPATGPADDEAPDAETTAAATTATTAAPTTATTAASTT. Repeat copies occupy residues 46 to 53, 54 to 61, and 62 to 69. The 3 X 8 AA tandem repeat of T-T-A-A-[APS]-T-T-A stretch occupies residues 46-69; sequence TTAAATTATTAAPTTATTAASTTA. The O-linked (GalNAc...) serine glycan is linked to serine 66. Residues threonine 67 and threonine 68 are each glycosylated (O-linked (GalNAc...) threonine).

Post-translationally, O-glycosylated. As to expression, expressed in mammary, salivary glands and prostate. Also detected in lung. Mainly expressed in cancer cell lines of breast origin. Highly expressed in lymph node-positive compared with node-negative tumors. Detected in all lymph node containing metastatic cells.

The protein localises to the secreted. The protein resides in the membrane. In terms of biological role, may play a role as marker for the diagnosis of metastatic breast cancer. The sequence is that of Mucin-like protein 1 (MUCL1) from Homo sapiens (Human).